A 118-amino-acid polypeptide reads, in one-letter code: Small nuclear ribonucleoprotein Sm D2 (118 aa).

Residues 1–31 (MSLLNKPKSEMTPEELQKREEEEFNTGPLSV) form a disordered region. An N-acetylserine modification is found at Ser-2. Residues Lys-6 and Lys-8 each participate in a glycyl lysine isopeptide (Lys-Gly) (interchain with G-Cter in SUMO2) cross-link. Basic and acidic residues predominate over residues 7-21 (PKSEMTPEELQKREE). Ser-9 is subject to Phosphoserine. A Phosphothreonine modification is found at Thr-12. In terms of domain architecture, Sm spans 29–115 (LSVLTQSVKN…VIVVLRNPLI (87 aa)).

It belongs to the snRNP core protein family. Core component of the spliceosomal U1, U2, U4 and U5 small nuclear ribonucleoproteins (snRNPs), the building blocks of the spliceosome. Most spliceosomal snRNPs contain a common set of Sm proteins, SNRPB, SNRPD1, SNRPD2, SNRPD3, SNRPE, SNRPF and SNRPG that assemble in a heptameric protein ring on the Sm site of the small nuclear RNA to form the core snRNP. Component of the U1 snRNP. The U1 snRNP is composed of the U1 snRNA and the 7 core Sm proteins SNRPB, SNRPD1, SNRPD2, SNRPD3, SNRPE, SNRPF and SNRPG, and at least three U1 snRNP-specific proteins SNRNP70/U1-70K, SNRPA/U1-A and SNRPC/U1-C. Component of the U4/U6-U5 tri-snRNP complex composed of the U4, U6 and U5 snRNAs and at least PRPF3, PRPF4, PRPF6, PRPF8, PRPF31, SNRNP200, TXNL4A, SNRNP40, SNRPB, SNRPD1, SNRPD2, SNRPD3, SNRPE, SNRPF, SNRPG, DDX23, CD2BP2, PPIH, SNU13, EFTUD2, SART1 and USP39, plus LSM2, LSM3, LSM4, LSM5, LSM6, LSM7 and LSM8. Component of the minor spliceosome, which splices U12-type introns. Part of the SMN-Sm complex that contains SMN1, GEMIN2/SIP1, DDX20/GEMIN3, GEMIN4, GEMIN5, GEMIN6, GEMIN7, GEMIN8, STRAP/UNRIP and the Sm proteins SNRPB, SNRPD1, SNRPD2, SNRPD3, SNRPE, SNRPF and SNRPG; catalyzes core snRNPs assembly. Forms a 6S pICln-Sm complex composed of CLNS1A/pICln, SNRPD1, SNRPD2, SNRPE, SNRPF and SNRPG; ring-like structure where CLNS1A/pICln mimics additional Sm proteins and which is unable to assemble into the core snRNP. Interacts with SMN1; the interaction is direct. Interacts with GEMIN2; the interaction is direct. Interacts with SNRPD1; the interaction is direct. Interacts with SNRPF; the interaction is direct.

It is found in the cytoplasm. Its subcellular location is the cytosol. The protein localises to the nucleus. Plays a role in pre-mRNA splicing as a core component of the spliceosomal U1, U2, U4 and U5 small nuclear ribonucleoproteins (snRNPs), the building blocks of the spliceosome. Component of both the pre-catalytic spliceosome B complex and activated spliceosome C complexes. As a component of the minor spliceosome, involved in the splicing of U12-type introns in pre-mRNAs. The protein is Small nuclear ribonucleoprotein Sm D2 (SNRPD2) of Homo sapiens (Human).